The sequence spans 457 residues: Glutamate--tRNA ligase 1 (457 aa).

The 'HIGH' region motif lies at 9–19 (PSPTGYIHIGN). Positions 250–254 (GLSKR) match the 'KMSKS' region motif. Lys-253 lines the ATP pocket.

This sequence belongs to the class-I aminoacyl-tRNA synthetase family. Glutamate--tRNA ligase type 1 subfamily. Monomer.

Its subcellular location is the cytoplasm. The enzyme catalyses tRNA(Glu) + L-glutamate + ATP = L-glutamyl-tRNA(Glu) + AMP + diphosphate. Catalyzes the attachment of glutamate to tRNA(Glu) in a two-step reaction: glutamate is first activated by ATP to form Glu-AMP and then transferred to the acceptor end of tRNA(Glu). The polypeptide is Glutamate--tRNA ligase 1 (Brucella canis (strain ATCC 23365 / NCTC 10854 / RM-666)).